The following is a 94-amino-acid chain: Phosphoribosyl-ATP pyrophosphatase (94 aa).

It belongs to the PRA-PH family.

The protein localises to the cytoplasm. The catalysed reaction is 1-(5-phospho-beta-D-ribosyl)-ATP + H2O = 1-(5-phospho-beta-D-ribosyl)-5'-AMP + diphosphate + H(+). Its pathway is amino-acid biosynthesis; L-histidine biosynthesis; L-histidine from 5-phospho-alpha-D-ribose 1-diphosphate: step 2/9. In Sulfurisphaera tokodaii (strain DSM 16993 / JCM 10545 / NBRC 100140 / 7) (Sulfolobus tokodaii), this protein is Phosphoribosyl-ATP pyrophosphatase (hisE).